Reading from the N-terminus, the 99-residue chain is uncharacterized protein (99 aa).

The segment at 1-99 (MSDFPPSYQQ…KYHSKSDVGF (99 aa)) is disordered. Over residues 19-29 (QESSTSNNASE) the composition is skewed to polar residues.

This is an uncharacterized protein from Schizosaccharomyces pombe (strain 972 / ATCC 24843) (Fission yeast).